Here is a 357-residue protein sequence, read N- to C-terminus: UDP-N-acetylglucosamine--N-acetylmuramyl-(pentapeptide) pyrophosphoryl-undecaprenol N-acetylglucosamine transferase (357 aa).

UDP-N-acetyl-alpha-D-glucosamine-binding positions include 12 to 14 (TAG), Arg166, Ser196, and Gln291.

This sequence belongs to the glycosyltransferase 28 family. MurG subfamily.

The protein localises to the cell membrane. The enzyme catalyses di-trans,octa-cis-undecaprenyl diphospho-N-acetyl-alpha-D-muramoyl-L-alanyl-D-glutamyl-meso-2,6-diaminopimeloyl-D-alanyl-D-alanine + UDP-N-acetyl-alpha-D-glucosamine = di-trans,octa-cis-undecaprenyl diphospho-[N-acetyl-alpha-D-glucosaminyl-(1-&gt;4)]-N-acetyl-alpha-D-muramoyl-L-alanyl-D-glutamyl-meso-2,6-diaminopimeloyl-D-alanyl-D-alanine + UDP + H(+). It participates in cell wall biogenesis; peptidoglycan biosynthesis. Functionally, cell wall formation. Catalyzes the transfer of a GlcNAc subunit on undecaprenyl-pyrophosphoryl-MurNAc-pentapeptide (lipid intermediate I) to form undecaprenyl-pyrophosphoryl-MurNAc-(pentapeptide)GlcNAc (lipid intermediate II). The sequence is that of UDP-N-acetylglucosamine--N-acetylmuramyl-(pentapeptide) pyrophosphoryl-undecaprenol N-acetylglucosamine transferase from Geobacillus kaustophilus (strain HTA426).